The sequence spans 77 residues: U8-lycotoxin-Ls1h (77 aa).

The N-terminal stretch at 1–20 is a signal peptide; it reads MKLIIFTGLVLFAIVSLIEV. A propeptide spanning residues 21-26 is cleaved from the precursor; that stretch reads QADNER.

The protein belongs to the neurotoxin 19 (CSTX) family. 08 (U8-Lctx) subfamily. In terms of processing, contains 4 disulfide bonds. Expressed by the venom gland.

The protein resides in the secreted. The polypeptide is U8-lycotoxin-Ls1h (Lycosa singoriensis (Wolf spider)).